Here is a 73-residue protein sequence, read N- to C-terminus: UPF0352 protein APL_0584 (73 aa).

Belongs to the UPF0352 family.

This Actinobacillus pleuropneumoniae serotype 5b (strain L20) protein is UPF0352 protein APL_0584.